Consider the following 145-residue polypeptide: Probable low molecular weight protein-tyrosine-phosphatase EpsP (145 aa).

C9 (nucleophile) is an active-site residue. R15 is an active-site residue. D114 (proton donor) is an active-site residue.

It belongs to the low molecular weight phosphotyrosine protein phosphatase family.

It carries out the reaction O-phospho-L-tyrosyl-[protein] + H2O = L-tyrosyl-[protein] + phosphate. It functions in the pathway glycan metabolism; exopolysaccharide biosynthesis. Functionally, may be involved in assembly or function of the EPS I polymerization/export complex and/or the EpsB ATPase. Alternatively it may function in the removal of the terminal phosphate from C55-isoprenyl pyrophosphate in order to recycle the C55-isoprenyl phosphate lipid carrier used in the synthesis of polysaccharide repeat units. The polypeptide is Probable low molecular weight protein-tyrosine-phosphatase EpsP (epsP) (Ralstonia nicotianae (strain ATCC BAA-1114 / GMI1000) (Ralstonia solanacearum)).